The primary structure comprises 329 residues: DNA-directed RNA polymerase subunit alpha (329 aa).

The interval 1–232 is alpha N-terminal domain (alpha-NTD); it reads MQEMLEQLLT…YQLIAFVDLK (232 aa). The interval 246-329 is alpha C-terminal domain (alpha-CTD); that stretch reads FDPIFLQPVD…PSSLVSKESA (84 aa).

This sequence belongs to the RNA polymerase alpha chain family. As to quaternary structure, homodimer. The RNAP catalytic core consists of 2 alpha, 1 beta, 1 beta' and 1 omega subunit. When a sigma factor is associated with the core the holoenzyme is formed, which can initiate transcription.

The enzyme catalyses RNA(n) + a ribonucleoside 5'-triphosphate = RNA(n+1) + diphosphate. In terms of biological role, DNA-dependent RNA polymerase catalyzes the transcription of DNA into RNA using the four ribonucleoside triphosphates as substrates. This Hydrogenovibrio crunogenus (strain DSM 25203 / XCL-2) (Thiomicrospira crunogena) protein is DNA-directed RNA polymerase subunit alpha.